A 647-amino-acid chain; its full sequence is Paraneoplastic antigen Ma6E (647 aa).

Disordered regions lie at residues 111 to 199 (QPQG…AGGA), 227 to 254 (GAAG…RAAG), 508 to 580 (AAAP…VPWG), and 608 to 647 (RGQE…SQGK). 3 stretches are compositionally biased toward gly residues: residues 122-149 (GEGG…GEAG), 158-199 (GEAG…AGGA), and 227-251 (GAAG…GEGR). Over residues 517 to 570 (PAAAQASPAQGNASEAGPGAEDAAEAASATKEAARGAPAAGEGESAPAGPEGLG) the composition is skewed to low complexity. Residues 625-636 (EEPENEDEDGAG) show a composition bias toward acidic residues.

In Homo sapiens (Human), this protein is Paraneoplastic antigen Ma6E.